Consider the following 168-residue polypeptide: Protein GrpE (168 aa).

This sequence belongs to the GrpE family. As to quaternary structure, homodimer.

Its subcellular location is the cytoplasm. Its function is as follows. Participates actively in the response to hyperosmotic and heat shock by preventing the aggregation of stress-denatured proteins, in association with DnaK and GrpE. It is the nucleotide exchange factor for DnaK and may function as a thermosensor. Unfolded proteins bind initially to DnaJ; upon interaction with the DnaJ-bound protein, DnaK hydrolyzes its bound ATP, resulting in the formation of a stable complex. GrpE releases ADP from DnaK; ATP binding to DnaK triggers the release of the substrate protein, thus completing the reaction cycle. Several rounds of ATP-dependent interactions between DnaJ, DnaK and GrpE are required for fully efficient folding. The sequence is that of Protein GrpE from Thermotoga neapolitana (strain ATCC 49049 / DSM 4359 / NBRC 107923 / NS-E).